We begin with the raw amino-acid sequence, 475 residues long: Ribulose bisphosphate carboxylase large chain (475 aa).

Residues 1-2 (MS) constitute a propeptide that is removed on maturation. Pro-3 carries the post-translational modification N-acetylproline. Lys-14 bears the N6,N6,N6-trimethyllysine mark. The substrate site is built by Asn-123 and Thr-173. Residue Lys-175 is the Proton acceptor of the active site. Residue Lys-177 coordinates substrate. The Mg(2+) site is built by Lys-201, Asp-203, and Glu-204. At Lys-201 the chain carries N6-carboxylysine. The active-site Proton acceptor is the His-294. The substrate site is built by Arg-295, His-327, and Ser-379.

It belongs to the RuBisCO large chain family. Type I subfamily. As to quaternary structure, heterohexadecamer of 8 large chains and 8 small chains. Mg(2+) serves as cofactor.

The protein resides in the plastid. It localises to the chloroplast. The enzyme catalyses 2 (2R)-3-phosphoglycerate + 2 H(+) = D-ribulose 1,5-bisphosphate + CO2 + H2O. It carries out the reaction D-ribulose 1,5-bisphosphate + O2 = 2-phosphoglycolate + (2R)-3-phosphoglycerate + 2 H(+). Functionally, ruBisCO catalyzes two reactions: the carboxylation of D-ribulose 1,5-bisphosphate, the primary event in carbon dioxide fixation, as well as the oxidative fragmentation of the pentose substrate in the photorespiration process. Both reactions occur simultaneously and in competition at the same active site. This Coleochaete orbicularis (Charophycean green alga) protein is Ribulose bisphosphate carboxylase large chain.